The sequence spans 206 residues: dITP/XTP pyrophosphatase (206 aa).

A substrate-binding site is contributed by 7-12 (SCHGYK). Catalysis depends on aspartate 70, which acts as the Proton acceptor. Mg(2+) is bound at residue aspartate 70. Residues threonine 71, 154-157 (FGYD), lysine 177, and 182-183 (HR) contribute to the substrate site.

It belongs to the HAM1 NTPase family. In terms of assembly, homodimer. Requires Mg(2+) as cofactor.

It catalyses the reaction XTP + H2O = XMP + diphosphate + H(+). The catalysed reaction is dITP + H2O = dIMP + diphosphate + H(+). It carries out the reaction ITP + H2O = IMP + diphosphate + H(+). Functionally, pyrophosphatase that catalyzes the hydrolysis of nucleoside triphosphates to their monophosphate derivatives, with a high preference for the non-canonical purine nucleotides XTP (xanthosine triphosphate), dITP (deoxyinosine triphosphate) and ITP. Seems to function as a house-cleaning enzyme that removes non-canonical purine nucleotides from the nucleotide pool, thus preventing their incorporation into DNA/RNA and avoiding chromosomal lesions. The chain is dITP/XTP pyrophosphatase from Chlamydia caviae (strain ATCC VR-813 / DSM 19441 / 03DC25 / GPIC) (Chlamydophila caviae).